Consider the following 562-residue polypeptide: Arginine--tRNA ligase (562 aa).

The 'HIGH' region signature appears at 122–132 (PNIAKPISMGH).

Belongs to the class-I aminoacyl-tRNA synthetase family. In terms of assembly, monomer.

Its subcellular location is the cytoplasm. It carries out the reaction tRNA(Arg) + L-arginine + ATP = L-arginyl-tRNA(Arg) + AMP + diphosphate. The sequence is that of Arginine--tRNA ligase from Pediococcus pentosaceus (strain ATCC 25745 / CCUG 21536 / LMG 10740 / 183-1w).